Consider the following 1543-residue polypeptide: Tubby-related protein 4 (1543 aa).

WD repeat units lie at residues 6 to 72 (EHGP…STPQ), 73 to 115 (RINF…YEGR), 116 to 158 (WSVE…SGQR), 159 to 237 (HWSS…SDDY), 238 to 276 (APPQDGPAAYPIPVQNIKPLLTVSFTSGDISLMNNYDDL), 277 to 334 (SPTV…GEHI), and 335 to 372 (FTLDTLVQRPIISICWGHRDSRLLMASGPALYVVRVEH). Positions 364-414 (ALYVVRVEHRVSSLQLLCQQAIASTLREDKDVSKLTLPPRLCSYLSTAFIP) constitute an SOCS box domain. Disordered stretches follow at residues 530–577 (SPKI…SVGS) and 829–850 (TKINPPPPYPGTIPAAPTTAAP). Serine 577 is modified (phosphoserine). 2 positions are modified to asymmetric dimethylarginine: arginine 945 and arginine 950. Disordered regions lie at residues 1004–1058 (SPRA…HTAS), 1326–1355 (VPQRTEKFGKKNRKRLDSRAEEGSVQAITE), and 1367–1453 (DFNS…ASEK). A compositionally biased stretch (polar residues) spans 1036–1050 (TCSQCSGTGPSSQPG). Over residues 1329 to 1347 (RTEKFGKKNRKRLDSRAEE) the composition is skewed to basic and acidic residues. Residues serine 1343 and serine 1374 each carry the phosphoserine modification. Positions 1443-1453 (EEAKCRRASEK) are enriched in basic and acidic residues. Residues 1466 to 1543 (VMANKQPLWN…ALANVTQRLK (78 aa)) are TUB.

Belongs to the TUB family. In terms of tissue distribution, expressed mainly in the brain, skeletal muscle, testis and kidney.

Its subcellular location is the cytoplasm. Its pathway is protein modification; protein ubiquitination. Its function is as follows. May be a substrate-recognition component of a SCF-like ECS (Elongin-Cullin-SOCS-box protein) E3 ubiquitin ligase complex which mediates the ubiquitination and subsequent proteasomal degradation of target proteins. This is Tubby-related protein 4 (TULP4) from Homo sapiens (Human).